A 504-amino-acid chain; its full sequence is 26S proteasome non-ATPase regulatory subunit 5 (504 aa).

Residue alanine 2 is modified to N-acetylalanine.

Belongs to the proteasome subunit S5B/HSM3 family. Interacts with PSMC1, PSMC2, PSMD1 and PSMD6. Part of transient complex containing PSMD5, PSMC2, PSMC1 and PSMD2 formed during the assembly of the 26S proteasome.

Acts as a chaperone during the assembly of the 26S proteasome, specifically of the base subcomplex of the PA700/19S regulatory complex (RC). In the initial step of the base subcomplex assembly is part of an intermediate PSMD5:PSMC2:PSMC1:PSMD2 module which probably assembles with a PSMD10:PSMC4:PSMC5:PAAF1 module followed by dissociation of PSMD5. This chain is 26S proteasome non-ATPase regulatory subunit 5 (Psmd5), found in Mus musculus (Mouse).